The primary structure comprises 729 residues: DNA topoisomerase 3 (729 aa).

A Toprim domain is found at 3–136 (KKAVLAEKPS…VKRLWISSVT (134 aa)). E9 and D105 together coordinate Mg(2+). Positions 153–590 (YETLYAAAAA…EMKEYAKAVV (438 aa)) constitute a Topo IA-type catalytic domain. Residues 187-192 (SCGRVQ) are interaction with DNA. The O-(5'-phospho-DNA)-tyrosine intermediate role is filled by Y311. The disordered stretch occupies residues 680 to 708 (FEQRRKQNKHKNVSKREVQSYMKKQNKQD).

Belongs to the type IA topoisomerase family. Mg(2+) serves as cofactor.

The enzyme catalyses ATP-independent breakage of single-stranded DNA, followed by passage and rejoining.. In terms of biological role, releases the supercoiling and torsional tension of DNA, which is introduced during the DNA replication and transcription, by transiently cleaving and rejoining one strand of the DNA duplex. Introduces a single-strand break via transesterification at a target site in duplex DNA. The scissile phosphodiester is attacked by the catalytic tyrosine of the enzyme, resulting in the formation of a DNA-(5'-phosphotyrosyl)-enzyme intermediate and the expulsion of a 3'-OH DNA strand. The free DNA strand then undergoes passage around the unbroken strand, thus removing DNA supercoils. Finally, in the religation step, the DNA 3'-OH attacks the covalent intermediate to expel the active-site tyrosine and restore the DNA phosphodiester backbone. This Shouchella clausii (strain KSM-K16) (Alkalihalobacillus clausii) protein is DNA topoisomerase 3.